Reading from the N-terminus, the 68-residue chain is Tabimmunregulin 1 (68 aa).

The first 26 residues, 1–26 (MLLKSYVFFLLSLLIVGLFTSRDADA), serve as a signal peptide directing secretion. Residues 27-38 (QYEDLVTGYLRK) constitute a propeptide that is removed on maturation.

In terms of tissue distribution, expressed in salivary glands.

Its subcellular location is the secreted. Its function is as follows. Horsefly salivary gland immunosuppressant protein that likely inhibits the host inflammatory response by regulation of anti- and pro-inflammatory cytokines. When tested on mouse splenocytes in the presence of LPS, it increases the secretion of the proinflammatory cytokine interleukin-10 (IL10) and decreases the secretion of the proinflammatory cytokine interferon-gamma (IFNG) in a dose-dependent manner. This Tabanus yao (Horsefly) protein is Tabimmunregulin 1.